The primary structure comprises 316 residues: Serine protease 45 (316 aa).

The first 38 residues, 1–38 (MAASLSRLSAGLAASRPLGLSRSFLLLVLLLLNSGYKG), serve as a signal peptide directing secretion. A Peptidase S1 domain is found at 49-290 (WWPKNLDLSR…YSRWIKKQIS (242 aa)). Cysteine 74 and cysteine 90 are joined by a disulfide. Histidine 89 (charge relay system) is an active-site residue. Residue asparagine 110 is glycosylated (N-linked (GlcNAc...) asparagine). Residue aspartate 137 is the Charge relay system of the active site. Residues asparagine 162 and asparagine 186 are each glycosylated (N-linked (GlcNAc...) asparagine). Intrachain disulfides connect cysteine 171/cysteine 248, cysteine 206/cysteine 229, and cysteine 238/cysteine 266. Serine 242 functions as the Charge relay system in the catalytic mechanism.

Belongs to the peptidase S1 family.

The protein localises to the secreted. The sequence is that of Serine protease 45 (PRSS45) from Bos taurus (Bovine).